Reading from the N-terminus, the 521-residue chain is Protein nucleotidyltransferase YdiU (521 aa).

8 residues coordinate ATP: Gly-109, Gly-111, Arg-112, Lys-131, Asp-143, Gly-144, Arg-194, and Arg-201. Residue Asp-270 is the Proton acceptor of the active site. 2 residues coordinate Mg(2+): Asn-271 and Asp-280. Residue Asp-280 coordinates ATP.

Belongs to the SELO family. Mg(2+) serves as cofactor. It depends on Mn(2+) as a cofactor.

The catalysed reaction is L-seryl-[protein] + ATP = 3-O-(5'-adenylyl)-L-seryl-[protein] + diphosphate. It carries out the reaction L-threonyl-[protein] + ATP = 3-O-(5'-adenylyl)-L-threonyl-[protein] + diphosphate. The enzyme catalyses L-tyrosyl-[protein] + ATP = O-(5'-adenylyl)-L-tyrosyl-[protein] + diphosphate. It catalyses the reaction L-histidyl-[protein] + UTP = N(tele)-(5'-uridylyl)-L-histidyl-[protein] + diphosphate. The catalysed reaction is L-seryl-[protein] + UTP = O-(5'-uridylyl)-L-seryl-[protein] + diphosphate. It carries out the reaction L-tyrosyl-[protein] + UTP = O-(5'-uridylyl)-L-tyrosyl-[protein] + diphosphate. Nucleotidyltransferase involved in the post-translational modification of proteins. It can catalyze the addition of adenosine monophosphate (AMP) or uridine monophosphate (UMP) to a protein, resulting in modifications known as AMPylation and UMPylation. In Burkholderia pseudomallei (strain K96243), this protein is Protein nucleotidyltransferase YdiU.